The chain runs to 488 residues: 3-octaprenyl-4-hydroxybenzoate carboxy-lyase (488 aa).

Mn(2+) is bound at residue N172. Prenylated FMN-binding positions include 175 to 177, 189 to 191, and 194 to 195; these read IYR, RWL, and RG. E238 provides a ligand contact to Mn(2+). Residue D287 is the Proton donor of the active site.

Belongs to the UbiD family. As to quaternary structure, homohexamer. Requires prenylated FMN as cofactor. The cofactor is Mn(2+).

Its subcellular location is the cell membrane. The catalysed reaction is a 4-hydroxy-3-(all-trans-polyprenyl)benzoate + H(+) = a 2-(all-trans-polyprenyl)phenol + CO2. It functions in the pathway cofactor biosynthesis; ubiquinone biosynthesis. Functionally, catalyzes the decarboxylation of 3-octaprenyl-4-hydroxy benzoate to 2-octaprenylphenol, an intermediate step in ubiquinone biosynthesis. The chain is 3-octaprenyl-4-hydroxybenzoate carboxy-lyase from Hahella chejuensis (strain KCTC 2396).